The primary structure comprises 867 residues: Protein translocase subunit SecA 1 (867 aa).

Residues Gln-86, 104–108 (GEGKT), and Asp-493 each bind ATP.

It belongs to the SecA family. In terms of assembly, monomer and homodimer. Part of the essential Sec protein translocation apparatus which comprises SecA, SecYEG and auxiliary proteins SecDF. Other proteins may also be involved.

It localises to the cell membrane. It is found in the cytoplasm. It catalyses the reaction ATP + H2O + cellular proteinSide 1 = ADP + phosphate + cellular proteinSide 2.. Functionally, part of the Sec protein translocase complex. Interacts with the SecYEG preprotein conducting channel. Has a central role in coupling the hydrolysis of ATP to the transfer of proteins into and across the cell membrane, serving as an ATP-driven molecular motor driving the stepwise translocation of polypeptide chains across the membrane. The sequence is that of Protein translocase subunit SecA 1 from Corynebacterium jeikeium (strain K411).